Consider the following 120-residue polypeptide: NADH-quinone oxidoreductase subunit A (120 aa).

3 consecutive transmembrane segments (helical) span residues 6 to 26, 63 to 83, and 89 to 109; these read YGIIAVFLVGGAATAVAALAT, FLYALVFLLFDVETVFLYPWA, and LGLFAFAEMIVFIGILVLGLW.

The protein belongs to the complex I subunit 3 family. NDH-1 is composed of 14 different subunits. Subunits NuoA, H, J, K, L, M, N constitute the membrane sector of the complex.

It is found in the cell membrane. It carries out the reaction a quinone + NADH + 5 H(+)(in) = a quinol + NAD(+) + 4 H(+)(out). In terms of biological role, NDH-1 shuttles electrons from NADH, via FMN and iron-sulfur (Fe-S) centers, to quinones in the respiratory chain. The immediate electron acceptor for the enzyme in this species is believed to be a menaquinone. Couples the redox reaction to proton translocation (for every two electrons transferred, four hydrogen ions are translocated across the cytoplasmic membrane), and thus conserves the redox energy in a proton gradient. The polypeptide is NADH-quinone oxidoreductase subunit A (Moorella thermoacetica (strain ATCC 39073 / JCM 9320)).